The primary structure comprises 235 residues: Purine nucleoside phosphorylase DeoD-type (235 aa).

His4 lines the a purine D-ribonucleoside pocket. Phosphate is bound by residues Gly20, Arg24, Arg43, and 87–90; that span reads RVGT. A purine D-ribonucleoside contacts are provided by residues 179-181 and 203-204; these read EME and SD. The active-site Proton donor is the Asp204.

It belongs to the PNP/UDP phosphorylase family. As to quaternary structure, homohexamer; trimer of homodimers.

It carries out the reaction a purine D-ribonucleoside + phosphate = a purine nucleobase + alpha-D-ribose 1-phosphate. It catalyses the reaction a purine 2'-deoxy-D-ribonucleoside + phosphate = a purine nucleobase + 2-deoxy-alpha-D-ribose 1-phosphate. Catalyzes the reversible phosphorolytic breakdown of the N-glycosidic bond in the beta-(deoxy)ribonucleoside molecules, with the formation of the corresponding free purine bases and pentose-1-phosphate. The sequence is that of Purine nucleoside phosphorylase DeoD-type from Exiguobacterium sibiricum (strain DSM 17290 / CCUG 55495 / CIP 109462 / JCM 13490 / 255-15).